We begin with the raw amino-acid sequence, 221 residues long: Thymidylate kinase (221 aa).

11–18 (GPDGAGKT) contacts ATP.

Belongs to the thymidylate kinase family.

The enzyme catalyses dTMP + ATP = dTDP + ADP. Functionally, phosphorylation of dTMP to form dTDP in both de novo and salvage pathways of dTTP synthesis. The chain is Thymidylate kinase from Lactiplantibacillus plantarum (strain ATCC BAA-793 / NCIMB 8826 / WCFS1) (Lactobacillus plantarum).